Consider the following 116-residue polypeptide: Small ribosomal subunit protein bS6 (116 aa).

The interval 94–116 (ESITEPSPLTKPKEDRKGDSEAA) is disordered. Basic and acidic residues predominate over residues 104–116 (KPKEDRKGDSEAA).

It belongs to the bacterial ribosomal protein bS6 family.

Functionally, binds together with bS18 to 16S ribosomal RNA. The sequence is that of Small ribosomal subunit protein bS6 from Idiomarina loihiensis (strain ATCC BAA-735 / DSM 15497 / L2-TR).